Consider the following 309-residue polypeptide: Dicarboxylate carrier UCP2 (309 aa).

Residues 1 to 16 (MVGFKATDVPPTATVK) are Mitochondrial intermembrane-facing. Solcar repeat units lie at residues 11–106 (PTAT…VKQF), 114–203 (AGIG…IKDT), and 212–297 (DDLP…LKRA). The interval 16–63 (KFLGAGTAACIADLITFPLDTAKVRLQIQGESQGLARTAASAQYRGVL) is important for interaction with long-chain fatty acids. A helical membrane pass occupies residues 17 to 40 (FLGAGTAACIADLITFPLDTAKVR). The Mitochondrial matrix portion of the chain corresponds to 41 to 77 (LQIQGESQGLARTAASAQYRGVLGTILTMVRTEGPRS). The helical transmembrane segment at 78–103 (LYNGLVAGLQRQMSFASVRIGLYDSV) threads the bilayer. The Mitochondrial intermembrane segment spans residues 104-119 (KQFYTKGSEHAGIGSR). A helical membrane pass occupies residues 120-145 (LLAGSTTGALAVAVAQPTDVVKVRFQ). At 146–173 (AQARAGGGRRYQSTVEAYKTIAREEGIR) the chain is on the mitochondrial matrix side. The helical transmembrane segment at 174-199 (GLWKGTSPNVARNAIVNCTELVTYDL) threads the bilayer. The Mitochondrial intermembrane portion of the chain corresponds to 200 to 217 (IKDTLLKANLMTDDLPCH). A helical membrane pass occupies residues 218–242 (FTSAFGAGFCTTVIASPVDVVKTRY). Residues 243-268 (MNSALGQYHSAGHCALTMLRKEGPRA) are Mitochondrial matrix-facing. Residues 269–294 (FYKGFMPSFLRLGSWNVVMFVTYEQL) form a helical membrane-spanning segment. Residues 278-285 (LRLGSWNV) form an important for interaction with long-chain fatty acids region. Topologically, residues 295–309 (KRALMAAYESREAPF) are mitochondrial intermembrane.

It belongs to the mitochondrial carrier (TC 2.A.29) family. Homotetramer. Adopts an asymmetrical dimer of dimers functional form. Interacts with MICU1 (when methylated); leading to decrease the calcium sensitivity of MICU1. In terms of tissue distribution, expressed in a variety of organs, with predominant expression in the heart, lung and spleen.

The protein localises to the mitochondrion inner membrane. It carries out the reaction L-aspartate(out) + phosphate(in) + H(+)(in) = L-aspartate(in) + phosphate(out) + H(+)(out). The enzyme catalyses oxaloacetate(out) + phosphate(in) + H(+)(in) = oxaloacetate(in) + phosphate(out) + H(+)(out). It catalyses the reaction (S)-malate(out) + phosphate(in) + H(+)(in) = (S)-malate(in) + phosphate(out) + H(+)(out). The catalysed reaction is malonate(out) + phosphate(in) + H(+)(in) = malonate(in) + phosphate(out) + H(+)(out). It carries out the reaction sulfate(out) + phosphate(in) + H(+)(in) = sulfate(in) + phosphate(out) + H(+)(out). The enzyme catalyses (S)-malate(out) = (S)-malate(in). It catalyses the reaction L-aspartate(out) = L-aspartate(in). The catalysed reaction is phosphate(in) = phosphate(out). It carries out the reaction chloride(in) = chloride(out). The enzyme catalyses H(+)(in) = H(+)(out). It catalyses the reaction a long-chain fatty acid(out) = a long-chain fatty acid(in). Antiporter that exports dicarboxylate intermediates of the Krebs cycle in exchange for phosphate plus a proton across the inner membrane of mitochondria, a process driven by mitochondrial motive force with an overall impact on glycolysis, glutaminolysis and glutathione-dependent redox balance. Continuous export of oxaloacetate and related four-carbon dicarboxylates from mitochondrial matrix into the cytosol negatively regulates the oxidation of acetyl-CoA substrates via the Krebs cycle lowering the ATP/ADP ratio and reactive oxygen species (ROS) production. May mediate inducible proton entry into the mitochondrial matrix affecting ATP turnover as a protection mechanism against oxidative stress. The proton currents are most likely associated with fatty acid flipping across the inner membrane of mitochondria in a metabolic process regulated by free fatty acids and purine nucleotides. Regulates the use of glucose as a source of energy. Required for glucose-induced DRP1-dependent mitochondrial fission and neuron activation in the ventromedial nucleus of the hypothalamus (VMH). This mitochondrial adaptation mechanism modulates the VMH pool of glucose-excited neurons with an impact on systemic glucose homeostasis. Regulates ROS levels and metabolic reprogramming of macrophages during the resolution phase of inflammation. Attenuates ROS production in response to IL33 to preserve the integrity of the Krebs cycle required for persistent production of itaconate and subsequent GATA3-dependent differentiation of inflammation-resolving alternatively activated macrophages. Can unidirectionally transport anions including L-malate, L-aspartate, phosphate and chloride ions. Does not mediate adaptive thermogenesis. This chain is Dicarboxylate carrier UCP2 (Ucp2), found in Rattus norvegicus (Rat).